An 83-amino-acid chain; its full sequence is UPF0298 protein SERP0712 (83 aa).

It belongs to the UPF0298 family.

Its subcellular location is the cytoplasm. This chain is UPF0298 protein SERP0712, found in Staphylococcus epidermidis (strain ATCC 35984 / DSM 28319 / BCRC 17069 / CCUG 31568 / BM 3577 / RP62A).